Consider the following 197-residue polypeptide: Ras-related protein Rab-7B (197 aa).

GTP contacts are provided by residues glycine 14–threonine 21, valine 33–threonine 38, aspartate 57–glutamine 61, asparagine 119–aspartate 122, and alanine 152–lysine 153. An Effector region motif is present at residues arginine 31–isoleucine 39. 2 S-geranylgeranyl cysteine lipidation sites follow: cysteine 196 and cysteine 197.

Belongs to the small GTPase superfamily. Rab family.

Protein transport. Probably involved in vesicular traffic. The protein is Ras-related protein Rab-7B (rab7B) of Dictyostelium discoideum (Social amoeba).